Consider the following 243-residue polypeptide: Phosphoribosylaminoimidazole-succinocarboxamide synthase (243 aa).

The protein belongs to the SAICAR synthetase family.

The enzyme catalyses 5-amino-1-(5-phospho-D-ribosyl)imidazole-4-carboxylate + L-aspartate + ATP = (2S)-2-[5-amino-1-(5-phospho-beta-D-ribosyl)imidazole-4-carboxamido]succinate + ADP + phosphate + 2 H(+). The protein operates within purine metabolism; IMP biosynthesis via de novo pathway; 5-amino-1-(5-phospho-D-ribosyl)imidazole-4-carboxamide from 5-amino-1-(5-phospho-D-ribosyl)imidazole-4-carboxylate: step 1/2. This is Phosphoribosylaminoimidazole-succinocarboxamide synthase from Thermosynechococcus vestitus (strain NIES-2133 / IAM M-273 / BP-1).